The primary structure comprises 739 residues: UPF0313 protein YgiQ (739 aa).

The region spanning 372–650 (AYEMIRFSVN…KALLRYHDPA (279 aa)) is the Radical SAM core domain. [4Fe-4S] cluster-binding residues include C386, C390, and C393. The disordered stretch occupies residues 685–739 (REARRQNRNTRPALTKHTPMATQRQTPATAKKASSTQSRPVNAGAKKRPKAAVGR). Residues 704–724 (MATQRQTPATAKKASSTQSRP) are compositionally biased toward polar residues. Residues 729–739 (AKKRPKAAVGR) are compositionally biased toward basic residues.

Belongs to the UPF0313 family. [4Fe-4S] cluster is required as a cofactor.

In Escherichia coli (strain K12), this protein is UPF0313 protein YgiQ (ygiQ).